Consider the following 264-residue polypeptide: Tritrans,polycis-undecaprenyl-diphosphate synthase (geranylgeranyl-diphosphate specific) (264 aa).

Residue Asp43 is part of the active site. Asp43 is a Mg(2+) binding site. Substrate is bound by residues Gly44–Arg47, Trp48, His60, and Ser88–Glu90. Residue Asn91 is the Proton acceptor of the active site. Substrate-binding positions include Phe92, Arg94, Arg213, and Arg219–Ser221. Glu232 contributes to the Mg(2+) binding site.

This sequence belongs to the UPP synthase family. As to quaternary structure, homodimer. Requires Mg(2+) as cofactor.

The enzyme catalyses geranylgeranyl diphosphate + 7 isopentenyl diphosphate = tri-trans,hepta-cis-undecaprenyl diphosphate + 7 diphosphate. Functionally, catalyzes the sequential condensation of isopentenyl diphosphate (IPP) with geranylgeranyl diphosphate (GGPP) to yield (2Z,6Z,10Z,14Z,18Z,22Z,26Z,30E,34E,38E)-undecaprenyl diphosphate (tritrans,heptacis-UPP). It is probably the precursor of glycosyl carrier lipids. The chain is Tritrans,polycis-undecaprenyl-diphosphate synthase (geranylgeranyl-diphosphate specific) from Pyrococcus furiosus (strain ATCC 43587 / DSM 3638 / JCM 8422 / Vc1).